A 552-amino-acid chain; its full sequence is Lysine--tRNA ligase (552 aa).

The short motif at 72–80 (PSGLPHLGT) is the 'HIGH' region element. Positions 320–324 (KISKS) match the 'KMSKS' region motif. Lys323 is a binding site for ATP.

The protein belongs to the class-I aminoacyl-tRNA synthetase family.

Its subcellular location is the cytoplasm. It catalyses the reaction tRNA(Lys) + L-lysine + ATP = L-lysyl-tRNA(Lys) + AMP + diphosphate. The protein is Lysine--tRNA ligase of Caulobacter vibrioides (strain ATCC 19089 / CIP 103742 / CB 15) (Caulobacter crescentus).